The primary structure comprises 540 residues: Transcription initiation factor IIF subunit alpha (540 aa).

Residues 1 to 26 show a composition bias toward basic and acidic residues; the sequence is MDSQETKVFENVKQENPDEKKPKVEE. Disordered regions lie at residues 1 to 39 and 70 to 106; these read MDSQ…QSQQ and IDPS…SSSN. Polar residues-rich tracts occupy residues 29 to 39 and 89 to 106; these read SQNNASTQSQQ and APSS…SSSN. S259 and S261 each carry phosphoserine. Positions 280–382 form a coiled coil; sequence MEGNEEDNKK…REEKLKSRFS (103 aa). Residues 341-416 are disordered; the sequence is YESDEEDEDP…SSQLQSPNTS (76 aa). A compositionally biased stretch (acidic residues) spans 359-369; it reads SEEEVLQEEEE. The segment covering 381–416 has biased composition (polar residues); that stretch reads FSANASKTNTPRPLERTPSSVSPVKASSQLQSPNTS. Phosphoserine is present on S399.

The protein belongs to the TFIIF alpha subunit family. Component of the fcp1/TFIIF/polII complex via interaction of tfg3 with both tfg1/TFIIF-alpha and tfg2/TFIIF-beta subunits.

Its subcellular location is the nucleus. TFIIF is a general transcription initiation factor that binds to RNA polymerase II and helps to recruit it to the initiation complex in collaboration with TFIIB. It promotes transcription elongation. The protein is Transcription initiation factor IIF subunit alpha (tfg1) of Schizosaccharomyces pombe (strain 972 / ATCC 24843) (Fission yeast).